The chain runs to 100 residues: Urease subunit gamma (100 aa).

This sequence belongs to the urease gamma subunit family. Heterotrimer of UreA (gamma), UreB (beta) and UreC (alpha) subunits. Three heterotrimers associate to form the active enzyme.

It localises to the cytoplasm. The enzyme catalyses urea + 2 H2O + H(+) = hydrogencarbonate + 2 NH4(+). It participates in nitrogen metabolism; urea degradation; CO(2) and NH(3) from urea (urease route): step 1/1. The sequence is that of Urease subunit gamma from Jannaschia sp. (strain CCS1).